The sequence spans 289 residues: MHNHHNGLKTAALFGVLWAVLLGLGAVIGSSMRSTTPIWIMALVGVGTTAYGYWNSDKLALRSMQAYPVTEEQAPQLYQIVRELSAKANQPMPRIYVSPTPAPNAFATGRNPQNAAVCCTEGILRLLSLRELRGVLGHELMHVYNRDILTSSVAAAVAGVITSVGQMLLIFGGGDRRNSNPLAVMAMALLAPLAAVVIQSAISRTREYDADEDGSALTGDPLALASALRKIHQGVQMVPLPPDQKLVNTSHLMIANPFRAGGVTRMFATHPPMQDRITRLELMAGGPAS.

Transmembrane regions (helical) follow at residues 10–30 and 34–54; these read TAAL…VIGS and STTP…YGYW. His-138 contacts Zn(2+). Glu-139 is a catalytic residue. A Zn(2+)-binding site is contributed by His-142. The next 2 membrane-spanning stretches (helical) occupy residues 153–173 and 182–202; these read VAAA…IFGG and LAVM…QSAI. Zn(2+) is bound at residue Glu-207.

It belongs to the peptidase M48B family. The cofactor is Zn(2+).

Its subcellular location is the cell membrane. This chain is Protease HtpX homolog, found in Arthrobacter sp. (strain FB24).